We begin with the raw amino-acid sequence, 511 residues long: E3 ubiquitin-protein ligase TRIM7 (511 aa).

Residues 29 to 82 (CSICLELFREPVSVECGHSFCRACIGRCWERPGAGSVGAATRAPPFPLPCPQCR) form an RING-type zinc finger. S107 is modified (phosphoserine; by RPS6KA5). The segment at 125-166 (AAAARCGQHGEPFKLYCQDDGRAICVVCDRAREHREHAVLPL) adopts a B box-type zinc-finger fold. The Zn(2+) site is built by C130, H133, C152, and H158. Residues 166–263 (LDEAVQEAKE…AQLGVEITQL (98 aa)) adopt a coiled-coil conformation. A B30.2/SPRY domain is found at 324-511 (MLKKFKEDLR…STGTYLRIWP (188 aa)).

This sequence belongs to the TRIM/RBCC family. Forms homodimers. Interacts with GNIP2. Interacts with GYG1. Interacts with RNF187 (via C-terminus). Phosphorylated at Ser-107 by RPS6KA5/MSK1, which stimulates the ubiquitin ligase activity. Post-translationally, auto-ubiquitinates via 'Lys-63'-linked polyubiquitination. As to expression, skeletal muscle and placenta, at lower levels in heart, brain and pancreas. Isoform 1 is widely expressed with high level in testis, kidney and heart.

Its subcellular location is the nucleus. The protein resides in the cytoplasm. The protein localises to the golgi apparatus. It carries out the reaction S-ubiquitinyl-[E2 ubiquitin-conjugating enzyme]-L-cysteine + [acceptor protein]-L-lysine = [E2 ubiquitin-conjugating enzyme]-L-cysteine + N(6)-ubiquitinyl-[acceptor protein]-L-lysine.. Its pathway is protein modification; protein ubiquitination. Functionally, E3 ubiquitin-protein ligase that have both tumor-promoting and tumor-suppressing activities and functions in several biological processes including innate immunity, regulation of ferroptosis as well as cell proliferation and migration. Acts as an antiviral effector against multiple viruses by targeting specific viral proteins for ubiquitination and degradation including norovirus NTPase protein or SARS-CoV-2 NSP5 and NSP8 proteins. Mechanistically, recognizes the C-terminal glutamine-containing motif usually generated by viral proteases that process the polyproteins and trigger their ubiquitination and subsequent degradation. Mediates 'Lys-63'-linked polyubiquitination and stabilization of the JUN coactivator RNF187 in response to growth factor signaling via the MEK/ERK pathway, thereby regulating JUN transactivation and cellular proliferation. Promotes the TLR4-mediated signaling activation through its E3 ligase domain leading to production of pro-inflammatory cytokines and type I interferon. Also plays a negative role in the regulation of exogenous cytosolic DNA virus-triggered immune response. Mechanistically, enhances the 'Lys-48'-linked ubiquitination of STING1 leading to its proteasome-dependent degradation. Mediates the ubiquitination of the SIN3-HDAC chromatin remodeling complex component BRMS1. Modulates NCOA4-mediated ferritinophagy and ferroptosis in glioblastoma cells by ubiquitinating NCOA4, leading to its degradation. (Microbial infection) Promotes Zika virus replication by mediating envelope protein E ubiquitination. The chain is E3 ubiquitin-protein ligase TRIM7 (TRIM7) from Homo sapiens (Human).